A 249-amino-acid polypeptide reads, in one-letter code: Imidazole glycerol phosphate synthase subunit HisF (249 aa).

Catalysis depends on residues Asp-11 and Asp-130.

This sequence belongs to the HisA/HisF family. In terms of assembly, heterodimer of HisH and HisF.

It is found in the cytoplasm. It catalyses the reaction 5-[(5-phospho-1-deoxy-D-ribulos-1-ylimino)methylamino]-1-(5-phospho-beta-D-ribosyl)imidazole-4-carboxamide + L-glutamine = D-erythro-1-(imidazol-4-yl)glycerol 3-phosphate + 5-amino-1-(5-phospho-beta-D-ribosyl)imidazole-4-carboxamide + L-glutamate + H(+). Its pathway is amino-acid biosynthesis; L-histidine biosynthesis; L-histidine from 5-phospho-alpha-D-ribose 1-diphosphate: step 5/9. In terms of biological role, IGPS catalyzes the conversion of PRFAR and glutamine to IGP, AICAR and glutamate. The HisF subunit catalyzes the cyclization activity that produces IGP and AICAR from PRFAR using the ammonia provided by the HisH subunit. The protein is Imidazole glycerol phosphate synthase subunit HisF of Sulfolobus acidocaldarius (strain ATCC 33909 / DSM 639 / JCM 8929 / NBRC 15157 / NCIMB 11770).